We begin with the raw amino-acid sequence, 420 residues long: MAKLTAVPLSALVDEPVHIQVTGLAPFQVVCLQASLKDEKGNLFSSQAFYRASEVGEVDLEHDPSLGGDYMGVHPMGLFWSLKPEKLLGRLIKRDVMNSPYQIHIKACHPYFPLQDIVVSPPLDSLTLERWYVAPGVKRIQVKESRIRGALFLPPGEGPFPGVIDLFGGAGGLMEFRASLLASRGFATLALAYWNYDDLPSRLEKVDLEYFEEGVEFLLRHPKVLGPGVGILSVCIGAEIGLSMAINLKQIRATVLINGPNFVSQSPHVYHGQVYPPVPSNEEFVVTNALGLVEFYRTFQETADKDSKYCFPIEKAHGHFLFVVGEDDKNLNSKVHANQAIAQLMKNGKKNWTLLSYPGAGHLIEPPYTPLCQASRMPILIPSLSWGGEVIPHAAAQEHSWKEIQKFLKQHLLPDLSSQL.

Lys-40 is subject to N6-succinyllysine. Ser-125 bears the Phosphoserine mark. Catalysis depends on charge relay system residues Cys-235 and Asp-328. 2 positions are modified to N6-succinyllysine: Lys-346 and Lys-350. His-362 acts as the Charge relay system in catalysis. Lys-409 is subject to N6-succinyllysine. Phosphoserine is present on Ser-418.

It belongs to the C/M/P thioester hydrolase family. In terms of assembly, monomer. As to expression, highly expressed in liver, kidney, gallbladder, proximal intestine and distal intestine. Weakly expressed in adrenal gland, lung, brain and muscle.

The protein resides in the cytoplasm. The protein localises to the cytosol. Its subcellular location is the peroxisome. The enzyme catalyses choloyl-CoA + glycine = glycocholate + CoA + H(+). It carries out the reaction hexadecanoyl-CoA + H2O = hexadecanoate + CoA + H(+). It catalyses the reaction choloyl-CoA + H2O = cholate + CoA + H(+). The catalysed reaction is chenodeoxycholoyl-CoA + H2O = chenodeoxycholate + CoA + H(+). The enzyme catalyses eicosanoyl-CoA + H2O = eicosanoate + CoA + H(+). It carries out the reaction octadecanoyl-CoA + H2O = octadecanoate + CoA + H(+). It catalyses the reaction docosanoyl-CoA + H2O = docosanoate + CoA + H(+). The catalysed reaction is tetracosanoyl-CoA + H2O = tetracosanoate + CoA + H(+). The enzyme catalyses hexacosanoyl-CoA + H2O = hexacosanoate + CoA + H(+). It carries out the reaction dodecanoyl-CoA + H2O = dodecanoate + CoA + H(+). It catalyses the reaction tetradecanoyl-CoA + H2O = tetradecanoate + CoA + H(+). The catalysed reaction is choloyl-CoA + taurine = taurocholate + CoA + H(+). The enzyme catalyses chenodeoxycholoyl-CoA + glycine = glycochenodeoxycholate + CoA + H(+). It carries out the reaction chenodeoxycholoyl-CoA + taurine = taurochenodeoxycholate + CoA + H(+). It catalyses the reaction eicosanoyl-CoA + glycine = N-eicosanoylglycinate + CoA + H(+). The catalysed reaction is hexacosanoyl-CoA + glycine = N-hexacosanoylglycine + CoA + H(+). The enzyme catalyses docosanoyl-CoA + glycine = N-docosanoylglycine + CoA + H(+). Functionally, catalyzes the amidation of bile acids (BAs) with the amino acid taurine. Selective for taurine conjugation of cholyl CoA and only taurine-conjugated BAs are found in bile. Amidation of BAs in the liver with taurine prior to their excretion into bile is an important biochemical event in bile acid metabolism. This conjugation (or amidation) plays several important biological roles in that it promotes the secretion of BAs and cholesterol into bile and increases the detergent properties of BAs in the intestine, which facilitates lipid and vitamin absorption. May also act as an acyl-CoA thioesterase that regulates intracellular levels of free fatty acids. In vitro, catalyzes the hydrolysis of long- and very long-chain saturated acyl-CoAs to the free fatty acid and coenzyme A (CoASH), and conjugates glycine to these acyl-CoAs. In Mus musculus (Mouse), this protein is Bile acid-CoA:amino acid N-acyltransferase (Baat).